A 968-amino-acid polypeptide reads, in one-letter code: Polycystin-2 (968 aa).

Residues 1–11 are compositionally biased toward polar residues; it reads MVNSSRVQPQQ. Disordered regions lie at residues 1 to 28 and 58 to 181; these read MVNS…DPGR and RIRQ…LPLE. At 1–219 the chain is on the cytoplasmic side; it reads MVNSSRVQPQ…STNREKYLKS (219 aa). The span at 62 to 83 shows a compositional bias: low complexity; that stretch reads AAARDPPAGAAASPSPPLSSCS. Phosphoserine is present on residues serine 76 and serine 80. Positions 95-107 are enriched in acidic residues; sequence EAEEEEEEVEGEE. Low complexity predominate over residues 123–139; that stretch reads RRSAASSAVSSVGARSR. Arginine 137 carries the omega-N-methylarginine modification. Residues 220 to 241 form a helical membrane-spanning segment; sequence VLRELVTYLLFLIVLCILTYGM. The Extracellular segment spans residues 242-468; it reads MSSNVYYYTR…PLKLIRYVTT (227 aa). Asparagine 299 and asparagine 305 each carry an N-linked (GlcNAc...) asparagine glycan. N-linked (GlcNAc...) (complex) asparagine glycosylation is present at asparagine 328. A disulfide bond links cysteine 331 and cysteine 344. N-linked (GlcNAc...) asparagine glycosylation is found at asparagine 362 and asparagine 375. The chain crosses the membrane as a helical span at residues 469-489; sequence FDFFLAACEIIFCFFIFYYVV. The Cytoplasmic portion of the chain corresponds to 490–505; it reads EEILEIRIHKLHYFRS. Residues 506-526 form a helical membrane-spanning segment; sequence FWNCLDVVIVVLSVVAIGINI. The Extracellular segment spans residues 527–552; that stretch reads YRTSNVEVLLQFLEDQNTFPNFEHLA. Residues 553–573 traverse the membrane as a helical segment; that stretch reads YWQIQFNNIAAVTVFFVWIKL. Cholesterol is bound at residue glutamine 557. Over 574–597 the chain is Cytoplasmic; it reads FKFINFNRTMSQLSTTMSRCAKDL. The helical transmembrane segment at 598 to 619 threads the bilayer; that stretch reads FGFAIMFFIIFLAYAQLAYLVF. Topologically, residues 620-631 are extracellular; it reads GTQVDDFSTFQE. The segment at residues 632–646 is an intramembrane region (pore-forming); it reads CIFTQFRIILGDINF. Leucine 641 serves as a coordination point for Ca(2+). A Selectivity filter motif is present at residues 641–643; it reads LGD. The Extracellular segment spans residues 647–654; that stretch reads AEIEEANR. The helical transmembrane segment at 655-675 threads the bilayer; that stretch reads VLGPIYFTTFVFFMFFILLNM. The Cytoplasmic segment spans residues 676-968; sequence FLAIINDTYS…GGNGSSNVHV (293 aa). The EF-hand domain occupies 750–785; sequence HTDAEIEAIFTKYDQDGDQELTEHEHQQMRDDLEKE. Ca(2+) is bound by residues aspartate 763, aspartate 765, aspartate 767, glutamate 769, and glutamate 774. The interval 764–831 is disordered; it reads QDGDQELTEH…HSSRRRGSIS (68 aa). Over residues 770–795 the composition is skewed to basic and acidic residues; it reads LTEHEHQQMRDDLEKEREDLDLDHSS. Over residues 796–807 the composition is skewed to low complexity; the sequence is LPRPMSSRSFPR. Phosphoserine is present on residues serine 801, serine 808, serine 812, and serine 829. The linker stretch occupies residues 803–822; the sequence is RSFPRSLDDSEEDDDEDSGH. The segment at 810–821 is important for interaction with PACS1 and PACS2; it reads DDSEEDDDEDSG. Positions 833–872 form a coiled coil; it reads GVSYEEFQVLVRRVDRMEHSIGSIVSKIDAVIVKLEIMER. Residues 917–968 form a disordered region; sequence ESDDAASQISHGLGTPVGLNGQPRPRSSRPSSSQSTEGMEGAGGNGSSNVHV. A compositionally biased stretch (low complexity) spans 938-951; it reads QPRPRSSRPSSSQS.

Belongs to the polycystin family. As to quaternary structure, homotetramer. Component of the heterotetrameric polycystin channel complex with PKD1; the tetramer contains one PKD1 chain and three PKD2 chains. Isoform 1 interacts with PKD1 while isoform 3 does not. Interacts with PKD1L1; probably forms a Ca(2+) channel. Interacts with CD2AP. Interacts with HAX1. Interacts with NEK8. Part of a complex containing AKAP5, ADCY5, ADCY6 and PDE4C. Interacts (via C-terminus) with TRPV4 (via C-terminus). Interacts (via C-terminal acidic region) with PACS1 and PACS2; these interactions retain the protein in the endoplasmic reticulum and prevent trafficking to the cell membrane. Interacts with TMEM33. Form a heterotetramer with TRPC1 with a 2:2 stoichiometry; has distinct channel properties separate from PKD2 or TRPC1 homomers alone. Interacts with TMEM120A; TMEM120A inhibits PKD2 channel activity through the physical association of PKD2 with TMEM120A. Interacts (via N-terminus) with RYR2; regulates RYR2 channel activity. In terms of processing, phosphorylated. Phosphorylation is important for protein function; a mutant that lacks the N-terminal phosphorylation sites cannot complement a zebrafish pkd2-deficient mutant. PKD-mediated phosphorylation at the C-terminus regulates its function in the release of Ca(2+) stores from the endoplasmic reticulum. Phosphorylation at Ser-812 regulates PKD2 trafficking. Phosphorylation at Ser-76 is required for PKD2 trafficking to or retention at the lateral plasma membrane. Phosphorylation at Ser-801, Ser-812 and Ser-829 regulates PKD2 channel activity. Post-translationally, N-glycosylated. The four subunits in a tetramer probably differ in the extent of glycosylation; simultaneous glycosylation of all experimentally validated sites would probably create steric hindrance. Thus, glycosylation at Asn-305 is not compatible with glycosylation at Asn-328; only one of these two residues is glycosylated at a given time. Sumoylated by SUMO1; sumoylation regulates PKD2 membrane recycling and is necessary for intravascular pressure-induced arterial contractility. Detected in fetal and adult kidney. Detected at the thick ascending limb of the loop of Henle, at distal tubules, including the distal convoluted tubule and cortical collecting tubules, with weak staining of the collecting duct. Detected on placenta syncytiotrophoblasts (at protein level). Strongly expressed in ovary, fetal and adult kidney, testis, and small intestine. Not detected in peripheral leukocytes.

It localises to the cell projection. The protein localises to the cilium membrane. Its subcellular location is the endoplasmic reticulum membrane. It is found in the cell membrane. The protein resides in the basolateral cell membrane. It localises to the cytoplasmic vesicle membrane. The protein localises to the golgi apparatus. Its subcellular location is the vesicle. It is found in the secreted. The protein resides in the extracellular exosome. It catalyses the reaction K(+)(in) = K(+)(out). It carries out the reaction Na(+)(in) = Na(+)(out). The enzyme catalyses Ca(2+)(in) = Ca(2+)(out). With respect to regulation, channel activity is regulated by phosphorylation. Channel activity is regulated by intracellular Ca(2+). At the endoplasmic reticulum membrane (ER), TMEM33 enhances its channel activity. TMEM120A inhibits the channel activity of PKD2, and mediates mechanosensitivity of the PKD2-TMEM120A channel complex. PKD1/PKD2 complex on the plasma membrane is activated by PKD1 N-terminus. Forms a nonselective cation channel. Can function as a homotetrameric ion channel or can form heteromer with PKD1. Displays distinct function depending on its subcellular localization and regulation by its binding partners. In primary cilium functions as a cation channel, with a preference for monovalent cations over divalent cations that allows K(+), Na(+) and Ca(2+) influx, with low selectivity for Ca(2+). Involved in fluid-flow mechanosensation by the primary cilium in renal epithelium. In the endoplasmic reticulum, likely functions as a K(+) channel to facilitate Ca(2+) release. The heterotetrameric PKD1/PKD2 channel has higher Ca(2+) permeability than homomeric PKD2 channel and acts as a primarily Ca(2+)-permeable channel. Interacts with and acts as a regulator of a number of other channels, such as TRPV4, TRPC1, IP3R, RYR2, ultimately further affecting intracellular signaling, to modulate intracellular Ca(2+) signaling. Together with TRPV4, forms mechano- and thermosensitive channels in cilium. In cardiomyocytes, PKD2 modulates Ca(2+) release from stimulated RYR2 receptors through direct association. Also involved in left-right axis specification via its role in sensing nodal flow; forms a complex with PKD1L1 in cilia to facilitate flow detection in left-right patterning. Acts as a regulator of cilium length together with PKD1. Mediates systemic blood pressure and contributes to the myogenic response in cerebral arteries though vasoconstriction. This chain is Polycystin-2, found in Homo sapiens (Human).